We begin with the raw amino-acid sequence, 316 residues long: Transaldolase (316 aa).

The Schiff-base intermediate with substrate role is filled by Lys132.

Belongs to the transaldolase family. Type 1 subfamily.

The protein resides in the cytoplasm. The catalysed reaction is D-sedoheptulose 7-phosphate + D-glyceraldehyde 3-phosphate = D-erythrose 4-phosphate + beta-D-fructose 6-phosphate. The protein operates within carbohydrate degradation; pentose phosphate pathway; D-glyceraldehyde 3-phosphate and beta-D-fructose 6-phosphate from D-ribose 5-phosphate and D-xylulose 5-phosphate (non-oxidative stage): step 2/3. Transaldolase is important for the balance of metabolites in the pentose-phosphate pathway. The protein is Transaldolase of Methylomonas aminofaciens.